A 222-amino-acid chain; its full sequence is Kinetochore protein Spc25 (222 aa).

Residues 51-86 (RHQRKVGKLQKVLMERREELDKRVSFIEELDRELEA) are a coiled coil.

The protein belongs to the SPC25 family. Component of the Ndc80 complex, which is composed of Ndc80, Nuf2 and Spc25.

The protein resides in the nucleus. The protein localises to the chromosome. It is found in the centromere. Its subcellular location is the kinetochore. In terms of biological role, acts as a component of the essential kinetochore-associated Ndc80 complex, which is required for chromosome segregation and spindle checkpoint activity during meiosis and mitosis. Required for kinetochore integrity and the organization of stable microtubule binding sites in the outer plate of the kinetochore. Participates in SAC signaling that responds specifically to disruptions in spindle microtubule dynamics. The NDC80 complex synergistically enhances the affinity of the SKA1 complex for microtubules and may allow the NDC80 complex to track depolymerizing microtubules. This Drosophila mauritiana (Fruit fly) protein is Kinetochore protein Spc25.